A 92-amino-acid chain; its full sequence is Large ribosomal subunit protein bL25 (92 aa).

Belongs to the bacterial ribosomal protein bL25 family. As to quaternary structure, part of the 50S ribosomal subunit; part of the 5S rRNA/L5/L18/L25 subcomplex. Contacts the 5S rRNA. Binds to the 5S rRNA independently of L5 and L18.

In terms of biological role, this is one of the proteins that binds to the 5S RNA in the ribosome where it forms part of the central protuberance. The chain is Large ribosomal subunit protein bL25 from Aliivibrio salmonicida (strain LFI1238) (Vibrio salmonicida (strain LFI1238)).